Consider the following 379-residue polypeptide: MDPTLAVGLISGTSLDGMDGALVEIAGSAQQPAVTTLATLALPYPAGLRGRLLHLAEGKPVPVAEVSALHRDVALAFADCALQLIEQAGFRCGQIACIGSHGQTVHHQPPADNAAGHTLQLGDGAWIAERTGVTTVGNFRTRDMAAGGQGAPLVPILDYLLLRDARRDRCIQNLGGIANVTYLRAGGGPEEVIAFDTGPANLLIDGTVQIALGEPFDRGGSLALQGTVDRDCLERWLADPYFRRPPPKSTGREYFGYARARRLAEESAHLPVADRVATVSELTVRSIERAYRDFLPRLPDEVFLCGGGARNGYIRARLGRLLAPARVAVSDEAGIDPDFKEAMAFALLAWLRCTGAPGNLPAVTGAGRAVPLGDVHPAG.

12–19 (GTSLDGMD) serves as a coordination point for ATP.

Belongs to the anhydro-N-acetylmuramic acid kinase family.

The catalysed reaction is 1,6-anhydro-N-acetyl-beta-muramate + ATP + H2O = N-acetyl-D-muramate 6-phosphate + ADP + H(+). The protein operates within amino-sugar metabolism; 1,6-anhydro-N-acetylmuramate degradation. It functions in the pathway cell wall biogenesis; peptidoglycan recycling. Functionally, catalyzes the specific phosphorylation of 1,6-anhydro-N-acetylmuramic acid (anhMurNAc) with the simultaneous cleavage of the 1,6-anhydro ring, generating MurNAc-6-P. Is required for the utilization of anhMurNAc either imported from the medium or derived from its own cell wall murein, and thus plays a role in cell wall recycling. This Gloeobacter violaceus (strain ATCC 29082 / PCC 7421) protein is Anhydro-N-acetylmuramic acid kinase.